The sequence spans 63 residues: 2-hydroxymuconate tautomerase (63 aa).

Residue proline 2 is the Proton acceptor; via imino nitrogen of the active site.

The protein belongs to the 4-oxalocrotonate tautomerase family. Homohexamer.

The catalysed reaction is (2Z,4E)-2-hydroxyhexa-2,4-dienedioate = (3E)-2-oxohex-3-enedioate. Its pathway is xenobiotic degradation; toluene degradation. It participates in xenobiotic degradation; xylene degradation. Catalyzes the ketonization of 2-hydroxymuconate stereoselectively to yield 2-oxo-3-hexenedioate. The chain is 2-hydroxymuconate tautomerase (xylH) from Pseudomonas putida (Arthrobacter siderocapsulatus).